Here is a 102-residue protein sequence, read N- to C-terminus: Small ribosomal subunit protein bS6 (102 aa).

This sequence belongs to the bacterial ribosomal protein bS6 family.

In terms of biological role, binds together with bS18 to 16S ribosomal RNA. The chain is Small ribosomal subunit protein bS6 from Deinococcus geothermalis (strain DSM 11300 / CIP 105573 / AG-3a).